The sequence spans 727 residues: 1,4-alpha-glucan branching enzyme GlgB (727 aa).

Asp-405 (nucleophile) is an active-site residue. Glu-458 serves as the catalytic Proton donor.

This sequence belongs to the glycosyl hydrolase 13 family. GlgB subfamily. As to quaternary structure, monomer.

It carries out the reaction Transfers a segment of a (1-&gt;4)-alpha-D-glucan chain to a primary hydroxy group in a similar glucan chain.. Its pathway is glycan biosynthesis; glycogen biosynthesis. Functionally, catalyzes the formation of the alpha-1,6-glucosidic linkages in glycogen by scission of a 1,4-alpha-linked oligosaccharide from growing alpha-1,4-glucan chains and the subsequent attachment of the oligosaccharide to the alpha-1,6 position. This is 1,4-alpha-glucan branching enzyme GlgB from Yersinia pestis bv. Antiqua (strain Antiqua).